We begin with the raw amino-acid sequence, 147 residues long: Hemoglobin subunit beta (147 aa).

At valine 2 the chain carries N-acetylvaline. A Globin domain is found at histidine 3 to histidine 147. The residue at position 13 (threonine 13) is a Phosphothreonine. Serine 45 bears the Phosphoserine mark. Lysine 60 carries the N6-acetyllysine modification. Histidine 64 contacts heme b. Lysine 83 bears the N6-acetyllysine mark. Histidine 93 contributes to the heme b binding site. At cysteine 94 the chain carries S-nitrosocysteine. Lysine 145 carries the N6-acetyllysine modification.

This sequence belongs to the globin family. As to quaternary structure, heterotetramer of two alpha chains and two beta chains. In terms of tissue distribution, red blood cells.

Its function is as follows. Involved in oxygen transport from the lung to the various peripheral tissues. This is Hemoglobin subunit beta (HBB) from Alouatta belzebul (Red-handed howler monkey).